A 119-amino-acid chain; its full sequence is Non-specific lipid-transfer protein 3 (119 aa).

The first 24 residues, 1–24 (MARSMKLACVVLAMCMLVAPMAEA), serve as a signal peptide directing secretion. 4 cysteine pairs are disulfide-bonded: Cys-28-Cys-77, Cys-38-Cys-54, Cys-55-Cys-100, and Cys-75-Cys-114.

Belongs to the plant LTP family. As to expression, expressed in roots, stem, leaves and tendrils of the mature plant.

Its function is as follows. Plant non-specific lipid-transfer proteins transfer phospholipids as well as galactolipids across membranes. May play a role in wax or cutin deposition in the cell walls of expanding epidermal cells and certain secretory tissues. The chain is Non-specific lipid-transfer protein 3 from Pisum sativum (Garden pea).